We begin with the raw amino-acid sequence, 129 residues long: Holo-[acyl-carrier-protein] synthase (129 aa).

Asp-8 and Glu-58 together coordinate Mg(2+).

The protein belongs to the P-Pant transferase superfamily. AcpS family. Requires Mg(2+) as cofactor.

The protein resides in the cytoplasm. The enzyme catalyses apo-[ACP] + CoA = holo-[ACP] + adenosine 3',5'-bisphosphate + H(+). Functionally, transfers the 4'-phosphopantetheine moiety from coenzyme A to a Ser of acyl-carrier-protein. The polypeptide is Holo-[acyl-carrier-protein] synthase (Geobacillus kaustophilus (strain HTA426)).